A 161-amino-acid polypeptide reads, in one-letter code: Disulfide bond formation protein B (161 aa).

Residues 1–8 (MQANSRAY) are Cytoplasmic-facing. A helical membrane pass occupies residues 9 to 25 (FLLIALVSFGLVGVALY). The Periplasmic portion of the chain corresponds to 26-43 (LQFEKGYQPCPLCVMQRF). Cysteines 35 and 38 form a disulfide. A helical membrane pass occupies residues 44–58 (AFIGIGIFSLLAAVA). The Cytoplasmic segment spans residues 59–63 (QNTRS). The helical transmembrane segment at 64-81 (LWQGLGMLSGIAGIAVAV) threads the bilayer. The Periplasmic segment spans residues 82 to 136 (YHVSLLLNPKASCGIDPLENWVNALPTAKALPQVFYADGLCTAPLPPVLGLSVPA). Cysteines 94 and 122 form a disulfide. Residues 137–155 (WSLIWLFILTLTLAVGLIR) traverse the membrane as a helical segment. Residues 156 to 161 (REKNFR) lie on the Cytoplasmic side of the membrane.

The protein belongs to the DsbB family.

The protein resides in the cell inner membrane. In terms of biological role, required for disulfide bond formation in some periplasmic proteins. Acts by oxidizing the DsbA protein. The sequence is that of Disulfide bond formation protein B from Cupriavidus necator (strain ATCC 17699 / DSM 428 / KCTC 22496 / NCIMB 10442 / H16 / Stanier 337) (Ralstonia eutropha).